Here is an 85-residue protein sequence, read N- to C-terminus: Phosphocarrier protein HPr (85 aa).

Positions 1-85 constitute an HPr domain; that stretch reads MFQNQVKITA…HLSLIMTELE (85 aa). Histidine 15 serves as the catalytic Pros-phosphohistidine intermediate.

It belongs to the HPr family.

It localises to the cytoplasm. In terms of biological role, general (non sugar-specific) component of the phosphoenolpyruvate-dependent sugar phosphotransferase system (sugar PTS). This major carbohydrate active-transport system catalyzes the phosphorylation of incoming sugar substrates concomitantly with their translocation across the cell membrane. The phosphoryl group from phosphoenolpyruvate (PEP) is transferred to the phosphoryl carrier protein HPr by enzyme I. Phospho-HPr then transfers it to the PTS EIIA domain. This chain is Phosphocarrier protein HPr (ptsH), found in Buchnera aphidicola subsp. Acyrthosiphon pisum (strain APS) (Acyrthosiphon pisum symbiotic bacterium).